Reading from the N-terminus, the 361-residue chain is Collagenase (361 aa).

The protein belongs to the peptidase U32 family. Homodimer. Requires a metal cation as cofactor.

Its activity is regulated as follows. Activity somewhat enhanced by calcium ions, inhibited by zinc and Fe(3+) ions and by p-chloromercuribenzoic acid and EDTA. Activity is enhanced by salivary peptide cystatin and reduced by salivary peptide histatin. Has collagenase activity. Active on soluble collagen, reconstituted type I collagen, heat denatured type I collagen and azocoll, but not gelatin or the synthetic bacterial collagenase substrate PZ-PLGPA. May play a role in virulence. This Porphyromonas gingivalis (Bacteroides gingivalis) protein is Collagenase.